Reading from the N-terminus, the 89-residue chain is Small ribosomal subunit protein uS15 (89 aa).

Belongs to the universal ribosomal protein uS15 family. As to quaternary structure, part of the 30S ribosomal subunit. Forms a bridge to the 50S subunit in the 70S ribosome, contacting the 23S rRNA.

Its function is as follows. One of the primary rRNA binding proteins, it binds directly to 16S rRNA where it helps nucleate assembly of the platform of the 30S subunit by binding and bridging several RNA helices of the 16S rRNA. Functionally, forms an intersubunit bridge (bridge B4) with the 23S rRNA of the 50S subunit in the ribosome. The polypeptide is Small ribosomal subunit protein uS15 (Parabacteroides distasonis (strain ATCC 8503 / DSM 20701 / CIP 104284 / JCM 5825 / NCTC 11152)).